The sequence spans 447 residues: Methylenetetrahydrofolate--tRNA-(uracil-5-)-methyltransferase TrmFO (447 aa).

13 to 18 (GAGLAG) lines the FAD pocket.

It belongs to the MnmG family. TrmFO subfamily. It depends on FAD as a cofactor.

The protein resides in the cytoplasm. It catalyses the reaction uridine(54) in tRNA + (6R)-5,10-methylene-5,6,7,8-tetrahydrofolate + NADH + H(+) = 5-methyluridine(54) in tRNA + (6S)-5,6,7,8-tetrahydrofolate + NAD(+). The catalysed reaction is uridine(54) in tRNA + (6R)-5,10-methylene-5,6,7,8-tetrahydrofolate + NADPH + H(+) = 5-methyluridine(54) in tRNA + (6S)-5,6,7,8-tetrahydrofolate + NADP(+). Catalyzes the folate-dependent formation of 5-methyl-uridine at position 54 (M-5-U54) in all tRNAs. This chain is Methylenetetrahydrofolate--tRNA-(uracil-5-)-methyltransferase TrmFO, found in Streptococcus thermophilus (strain CNRZ 1066).